We begin with the raw amino-acid sequence, 237 residues long: DNA polymerase III subunit epsilon (237 aa).

The a divalent metal cation site is built by D10 and E12. The substrate site is built by D10, E12, and H64. The active-site Proton acceptor is H159. D164 provides a ligand contact to a divalent metal cation. Residue D164 coordinates substrate.

In terms of assembly, the DNA polymerase holoenzyme is a complex that contains 10 different types of subunits. These subunits are organized into 3 functionally essential subassemblies: the pol III core, the beta sliding clamp processivity factor and the clamp-loading complex. The pol III core (subunits alpha,epsilon and theta) contains the polymerase and the 3'-5' exonuclease proofreading activities. The polymerase is tethered to the template via the sliding clamp processivity factor. The clamp-loading complex assembles the beta processivity factor onto the primer template and plays a central role in the organization and communication at the replication fork. This complex contains delta, delta', psi and chi, and copies of either or both of two different DnaX proteins, gamma and tau. The composition of the holoenzyme is, therefore: (alpha,epsilon,theta)[2]-(gamma/tau)[3]-delta,delta', psi,chi-beta[4]. Requires Mg(2+) as cofactor. The cofactor is Mn(2+).

It catalyses the reaction DNA(n) + a 2'-deoxyribonucleoside 5'-triphosphate = DNA(n+1) + diphosphate. In terms of biological role, DNA polymerase III is a complex, multichain enzyme responsible for most of the replicative synthesis in bacteria. The epsilon subunit contain the editing function and is a proofreading 3'-5' exonuclease. This Buchnera aphidicola subsp. Acyrthosiphon pisum (strain APS) (Acyrthosiphon pisum symbiotic bacterium) protein is DNA polymerase III subunit epsilon (dnaQ).